Reading from the N-terminus, the 236-residue chain is 15,16-dihydrobiliverdin:ferredoxin oxidoreductase (236 aa).

It belongs to the HY2 family.

It catalyses the reaction 15,16-dihydrobiliverdin + oxidized 2[4Fe-4S]-[ferredoxin] = biliverdin IXalpha + reduced 2[4Fe-4S]-[ferredoxin] + 2 H(+). Catalyzes the two-electron reduction of biliverdin IX-alpha at the C15 methine bridge. The polypeptide is 15,16-dihydrobiliverdin:ferredoxin oxidoreductase (pebA) (Synechococcus sp. (strain WH8020)).